The chain runs to 251 residues: uncharacterized protein (251 aa).

This is an uncharacterized protein from Haemophilus influenzae (strain ATCC 51907 / DSM 11121 / KW20 / Rd).